The primary structure comprises 533 residues: Calcitonin receptor (533 aa).

The first 41 residues, 1-41 (MTPRRSRVKRRNLRKPKMRFLLVNRFTLLLLLLVSPTPVLQ), serve as a signal peptide directing secretion. Over 42 to 163 (APTNLTDSGL…FTSEKLQNAY (122 aa)) the chain is Extracellular. N-linked (GlcNAc...) asparagine glycans are attached at residues N45, N90, N142, and N147. 3 disulfides stabilise this stretch: C72/C98, C89/C129, and C112/C151. A helical membrane pass occupies residues 164 to 186 (VLYYLALVGHSLSIAALVASMLI). Residues 187-198 (FWIFKNLSCQRV) are Cytoplasmic-facing. A helical membrane pass occupies residues 199–219 (TLHKHMFLTYILNSIIIIIHL). The Extracellular portion of the chain corresponds to 220 to 273 (VEVVPNGDLVRRDPMHIFHHNTHMWTMQWELSPPLPLSAHEGKMDPHASEVISC). A disulfide bond links C273 and C343. Residues 274–296 (KVLHFLHQYMMSCNYFWMLCEGI) form a helical membrane-spanning segment. Over 297–313 (YLHTLIVMAVFTDEQRL) the chain is Cytoplasmic. A helical membrane pass occupies residues 314–334 (RWYYLLGWGFPIVPTIIHAIT). Residues 335–350 (RALYYNDNCWLSAETH) lie on the Extracellular side of the membrane. Residues 351–374 (LLYIIHGPVMVALVVNFFFLLNIV) form a helical membrane-spanning segment. Topologically, residues 375 to 394 (RVLVTKMRQTHEAESYMYLK) are cytoplasmic. A helical transmembrane segment spans residues 395 to 413 (AVKATMVLVPLLGIQFVVF). Topologically, residues 414–421 (PWRPSNKV) are extracellular. A helical membrane pass occupies residues 422–448 (LGKIYDYLMHSLIHFQGFFVATIYCFC). Residues 449–533 (NHEVQVTLKR…MNVIQQDASA (85 aa)) are Cytoplasmic-facing.

This sequence belongs to the G-protein coupled receptor 2 family. Heterodimer of CALCR and RAMP1, RAMP2 or RAMP3; the receptor complexes function as AMYR1, AMYR2 and AMYR3 receptors, respectively, and respond to amylin/IAPP, calcitonin/CT and CGRP1 ligands. Interacts with GPRASP2.

The protein localises to the cell membrane. Functionally, g protein-coupled receptor activated by ligand peptides amylin (IAPP), calcitonin (CT/CALCA) and calcitonin gene-related peptide type 1 (CGRP1/CALCA). CALCR interacts with receptor-activity-modifying proteins RAMP1, 2 and 3 to form receptor complexes AMYR1, 2 and 3, respectively. IAPP, CT and CGRP1 activate CALCR and AMYRs with distinct modes of receptor activation resulting in specific phenotypes. Ligand binding causes a conformation change that triggers signaling via guanine nucleotide-binding proteins (G proteins) and modulates the activity of downstream effectors. Activates cAMP-dependent pathway. The chain is Calcitonin receptor from Mus musculus (Mouse).